A 1356-amino-acid chain; its full sequence is Spike glycoprotein (1356 aa).

The first 12 residues, 1–12 (MLLIIFILPTTL), serve as a signal peptide directing secretion. Over 13 to 1300 (AVIGDFNCTN…GTYEMYVKWP (1288 aa)) the chain is Extracellular. Positions 14–294 (VIGDFNCTNF…SFFSEIQCKT (281 aa)) constitute a BetaCoV S1-NTD domain. 9 N-linked (GlcNAc...) asparagine; by host glycosylation sites follow: N19, N29, N58, N114, N132, N171, N188, N192, and N251. 3 disulfides stabilise this stretch: C20–C156, C151–C183, and C163–C242. Intrachain disulfides connect C282–C292 and C327–C352. One can recognise a BetaCoV S1-CTD domain in the interval 325-607 (PDCDIDKWLN…GINSGTTCSN (283 aa)). N-linked (GlcNAc...) asparagine; by host glycosylation occurs at N355. Cystine bridges form between C370-C423 and C382-C605. N-linked (GlcNAc...) asparagine; by host glycosylation is found at N433, N454, N470, N564, N666, N686, N705, N726, N775, N780, and N797. 2 fusion peptide regions span residues 905 to 926 (SFFEDLLFDKVKLSDVGFVEAY) and 924 to 944 (EAYNNCTGGSEIRDLLCVQSF). An N-linked (GlcNAc...) asparagine; by host glycan is attached at N928. A disulfide bridge links C929 with C940. Residues 1005-1055 (QKLIATAFNNALLSIQNGFSATNSALAKIQSVVNSNAQALNSLLQQLFNKF) form a heptad repeat 1 region. Residues 1034-1078 (QSVVNSNAQALNSLLQQLFNKFGAISSSLQEILSRLDALEAQVQI) are a coiled coil. Residues N1215, N1225, N1244, N1251, N1260, and N1281 are each glycosylated (N-linked (GlcNAc...) asparagine; by host). The interval 1249-1289 (APNLTLNLHTINATFLDLYYEMNLIQESIKSLNNSYINLKD) is heptad repeat 2. The stretch at 1262-1290 (TFLDLYYEMNLIQESIKSLNNSYINLKDI) forms a coiled coil. Residues 1301–1321 (WYVWLLISFSFIIFLVLLFFI) traverse the membrane as a helical segment. Topologically, residues 1322–1356 (CCCTGCGSACFSKCHNCCDEYGGHHDFVIKTSHDD) are cytoplasmic. The KxHxx motif lies at 1352–1356 (TSHDD).

This sequence belongs to the betacoronaviruses spike protein family. As to quaternary structure, homotrimer; each monomer consists of a S1 and a S2 subunit. The resulting peplomers protrude from the virus surface as spikes. In terms of processing, specific enzymatic cleavages in vivo yield mature proteins. The precursor is processed into S1 and S2 by host cell furin or another cellular protease to yield the mature S1 and S2 proteins. Additionally, a second cleavage leads to the release of a fusion peptide after viral attachment to host cell receptor. Post-translationally, the cytoplasmic Cys-rich domain is palmitoylated. Spike glycoprotein is digested within host endosomes.

It is found in the virion membrane. The protein resides in the host endoplasmic reticulum-Golgi intermediate compartment membrane. Its subcellular location is the host cell membrane. Its function is as follows. Attaches the virion to the cell membrane by interacting with host receptor, initiating the infection. Mediates fusion of the virion and cellular membranes by acting as a class I viral fusion protein. Under the current model, the protein has at least three conformational states: pre-fusion native state, pre-hairpin intermediate state, and post-fusion hairpin state. During viral and target cell membrane fusion, the coiled coil regions (heptad repeats) assume a trimer-of-hairpins structure, positioning the fusion peptide in close proximity to the C-terminal region of the ectodomain. The formation of this structure appears to drive apposition and subsequent fusion of viral and target cell membranes. In terms of biological role, acts as a viral fusion peptide which is unmasked following S2 cleavage occurring upon virus endocytosis. The protein is Spike glycoprotein of Human coronavirus HKU1 (isolate N1) (HCoV-HKU1).